The chain runs to 256 residues: 3-dehydroquinate dehydratase (256 aa).

Residues S19, 38–40 (EIR), and R68 contribute to the 3-dehydroquinate site. Residue H122 is the Proton donor/acceptor of the active site. K147 acts as the Schiff-base intermediate with substrate in catalysis. Positions 185, 204, and 208 each coordinate 3-dehydroquinate.

The protein belongs to the type-I 3-dehydroquinase family. As to quaternary structure, homodimer.

It carries out the reaction 3-dehydroquinate = 3-dehydroshikimate + H2O. It participates in metabolic intermediate biosynthesis; chorismate biosynthesis; chorismate from D-erythrose 4-phosphate and phosphoenolpyruvate: step 3/7. Functionally, involved in the third step of the chorismate pathway, which leads to the biosynthesis of aromatic amino acids. Catalyzes the cis-dehydration of 3-dehydroquinate (DHQ) and introduces the first double bond of the aromatic ring to yield 3-dehydroshikimate. The protein is 3-dehydroquinate dehydratase of Methanospirillum hungatei JF-1 (strain ATCC 27890 / DSM 864 / NBRC 100397 / JF-1).